The following is a 375-amino-acid chain: Succinyl-diaminopimelate desuccinylase (375 aa).

Histidine 66 serves as a coordination point for Zn(2+). Aspartate 68 is an active-site residue. Aspartate 99 is a binding site for Zn(2+). Catalysis depends on glutamate 133, which acts as the Proton acceptor. 3 residues coordinate Zn(2+): glutamate 134, glutamate 162, and histidine 348.

It belongs to the peptidase M20A family. DapE subfamily. Homodimer. Zn(2+) serves as cofactor. Requires Co(2+) as cofactor.

The catalysed reaction is N-succinyl-(2S,6S)-2,6-diaminopimelate + H2O = (2S,6S)-2,6-diaminopimelate + succinate. The protein operates within amino-acid biosynthesis; L-lysine biosynthesis via DAP pathway; LL-2,6-diaminopimelate from (S)-tetrahydrodipicolinate (succinylase route): step 3/3. Its function is as follows. Catalyzes the hydrolysis of N-succinyl-L,L-diaminopimelic acid (SDAP), forming succinate and LL-2,6-diaminopimelate (DAP), an intermediate involved in the bacterial biosynthesis of lysine and meso-diaminopimelic acid, an essential component of bacterial cell walls. This is Succinyl-diaminopimelate desuccinylase from Erwinia tasmaniensis (strain DSM 17950 / CFBP 7177 / CIP 109463 / NCPPB 4357 / Et1/99).